The following is a 445-amino-acid chain: UPF0210 protein STK_02450 (445 aa).

This sequence belongs to the UPF0210 family.

The protein is UPF0210 protein STK_02450 of Sulfurisphaera tokodaii (strain DSM 16993 / JCM 10545 / NBRC 100140 / 7) (Sulfolobus tokodaii).